Here is a 488-residue protein sequence, read N- to C-terminus: MAASATATVGTKGVVRQVIGPVLDVEFPAGKLPSILNALRIEGKNPAGQDVALTAEVQQLLGDHRVRAVAMSGTDGLVRGMEALDTGAPISVPVGEATLGRIFNVLGEPVDEQGDLKNVTTSPIHRSAPSLTDLETKPKVFETGIKVIDLLAPYRQGGKVGLFGGAGVGKTVLIQELINNIAKEHGGVSVFGGVGERTREGNDLYEEFKESGVINSEDLTKSKLALCFGQMNEPPGARMRVGLSALTMAEHFRDVNKQDVLLFIDNIFRFVQAGSEVSALLGRMPSAVGYQPTLGTDVGELQERITSTLEGSITSIQAVYVPADDLTDPAPATTFAHLDATTVLARALAAKGIYPAVDPLDSTSTMLQPSVVGDEHYRTARAVQSTLQRYKELQDIIAILGLDELSEEDRKTVDRARKIEKFLSQPFFVAEIFTGMSGKYVKLEDTIKGFNMILSGELDQLPEQAFYLVGSIDEVKAKAEKIASEAKA.

164 to 171 (GGAGVGKT) lines the ATP pocket.

The protein belongs to the ATPase alpha/beta chains family. As to quaternary structure, F-type ATPases have 2 components, CF(1) - the catalytic core - and CF(0) - the membrane proton channel. CF(1) has five subunits: alpha(3), beta(3), gamma(1), delta(1), epsilon(1). CF(0) has four main subunits: a(1), b(1), b'(1) and c(9-12).

The protein resides in the cellular thylakoid membrane. It catalyses the reaction ATP + H2O + 4 H(+)(in) = ADP + phosphate + 5 H(+)(out). Produces ATP from ADP in the presence of a proton gradient across the membrane. The catalytic sites are hosted primarily by the beta subunits. The polypeptide is ATP synthase subunit beta (Prochlorococcus marinus (strain NATL2A)).